A 192-amino-acid chain; its full sequence is MAEPVLVVGLGNPGPQYATTRHNAGFMVVDILADRMGEKFKVHKKSGAEVATGRLAGRPVVLAKPRVYMNESGRQVGPLAKFYSVAPADVVIVHDELDIDFGRIRLKAGGGVAGHNGLRSVASALGGNDFQRVRVGIGRPPGHKSGASFVLENFNSVERKEVPTILEQAADATELLVAQGLEPAQNTVHAWG.

Position 17 (Y17) interacts with tRNA. H22 serves as the catalytic Proton acceptor. Residues Y68, N70, and N116 each coordinate tRNA.

Belongs to the PTH family. In terms of assembly, monomer.

It is found in the cytoplasm. The catalysed reaction is an N-acyl-L-alpha-aminoacyl-tRNA + H2O = an N-acyl-L-amino acid + a tRNA + H(+). Hydrolyzes ribosome-free peptidyl-tRNAs (with 1 or more amino acids incorporated), which drop off the ribosome during protein synthesis, or as a result of ribosome stalling. In terms of biological role, catalyzes the release of premature peptidyl moieties from peptidyl-tRNA molecules trapped in stalled 50S ribosomal subunits, and thus maintains levels of free tRNAs and 50S ribosomes. The sequence is that of Peptidyl-tRNA hydrolase from Mycolicibacterium vanbaalenii (strain DSM 7251 / JCM 13017 / BCRC 16820 / KCTC 9966 / NRRL B-24157 / PYR-1) (Mycobacterium vanbaalenii).